We begin with the raw amino-acid sequence, 357 residues long: UDP-N-acetylglucosamine--N-acetylmuramyl-(pentapeptide) pyrophosphoryl-undecaprenol N-acetylglucosamine transferase (357 aa).

UDP-N-acetyl-alpha-D-glucosamine-binding positions include 13 to 15 (TGG), N122, R163, S191, and Q288.

This sequence belongs to the glycosyltransferase 28 family. MurG subfamily.

It is found in the cell inner membrane. The catalysed reaction is di-trans,octa-cis-undecaprenyl diphospho-N-acetyl-alpha-D-muramoyl-L-alanyl-D-glutamyl-meso-2,6-diaminopimeloyl-D-alanyl-D-alanine + UDP-N-acetyl-alpha-D-glucosamine = di-trans,octa-cis-undecaprenyl diphospho-[N-acetyl-alpha-D-glucosaminyl-(1-&gt;4)]-N-acetyl-alpha-D-muramoyl-L-alanyl-D-glutamyl-meso-2,6-diaminopimeloyl-D-alanyl-D-alanine + UDP + H(+). The protein operates within cell wall biogenesis; peptidoglycan biosynthesis. Its function is as follows. Cell wall formation. Catalyzes the transfer of a GlcNAc subunit on undecaprenyl-pyrophosphoryl-MurNAc-pentapeptide (lipid intermediate I) to form undecaprenyl-pyrophosphoryl-MurNAc-(pentapeptide)GlcNAc (lipid intermediate II). The chain is UDP-N-acetylglucosamine--N-acetylmuramyl-(pentapeptide) pyrophosphoryl-undecaprenol N-acetylglucosamine transferase from Gloeobacter violaceus (strain ATCC 29082 / PCC 7421).